A 101-amino-acid chain; its full sequence is Urease subunit gamma (101 aa).

It belongs to the urease gamma subunit family. Heterotrimer of UreA (gamma), UreB (beta) and UreC (alpha) subunits. Three heterotrimers associate to form the active enzyme.

The protein resides in the cytoplasm. It catalyses the reaction urea + 2 H2O + H(+) = hydrogencarbonate + 2 NH4(+). The protein operates within nitrogen metabolism; urea degradation; CO(2) and NH(3) from urea (urease route): step 1/1. The chain is Urease subunit gamma from Ureaplasma parvum serovar 3 (strain ATCC 27815 / 27 / NCTC 11736).